The chain runs to 106 residues: Violacin-A (106 aa).

The signal sequence occupies residues 1–29 (MDAQKMKMVIGLVLVATTAFALMIPAASA). A propeptide spanning residues 30 to 79 (VDDFITRRAYDNLVKSGAIKDIPVMAKTIISNPVLEEGMLTYYTNKKLGD) is cleaved from the precursor. 3 disulfides stabilise this stretch: cysteine 84–cysteine 98, cysteine 88–cysteine 100, and cysteine 93–cysteine 105.

It belongs to the cyclotide family. Moebius subfamily. Post-translationally, violacin-A is not a cyclic peptide.

In terms of biological role, probably participates in a plant defense mechanism. Has low hemolytic activity. The sequence is that of Violacin-A from Viola odorata (Sweet violet).